The sequence spans 234 residues: Lipoprotein-releasing system ATP-binding protein LolD (234 aa).

The 221-residue stretch at 13–233 folds into the ABC transporter domain; the sequence is IYLHEIKRQY…SLSDGQVVEL (221 aa). 49–56 serves as a coordination point for ATP; that stretch reads APSGSGKS.

The protein belongs to the ABC transporter superfamily. Lipoprotein translocase (TC 3.A.1.125) family. As to quaternary structure, the complex is composed of two ATP-binding proteins (LolD) and two transmembrane proteins (LolC and LolE).

The protein resides in the cell inner membrane. Part of the ABC transporter complex LolCDE involved in the translocation of mature outer membrane-directed lipoproteins, from the inner membrane to the periplasmic chaperone, LolA. Responsible for the formation of the LolA-lipoprotein complex in an ATP-dependent manner. This is Lipoprotein-releasing system ATP-binding protein LolD from Bradyrhizobium diazoefficiens (strain JCM 10833 / BCRC 13528 / IAM 13628 / NBRC 14792 / USDA 110).